The sequence spans 391 residues: Chaperone protein DnaJ (391 aa).

One can recognise a J domain in the interval 6-70 (DYYEILEVSR…EKRKLYDTYG (65 aa)). A CR-type zinc finger spans residues 145 to 226 (GCIKNVKYTR…CKSRRMVDEV (82 aa)). C158, C161, C174, C177, C200, C203, C214, and C217 together coordinate Zn(2+). CXXCXGXG motif repeat units follow at residues 158–165 (CPDCNGSG), 174–181 (CSDCNGEG), 200–207 (CPSCKGEG), and 214–221 (CKKCKSRR).

This sequence belongs to the DnaJ family. Homodimer. Zn(2+) serves as cofactor.

It is found in the cytoplasm. Functionally, participates actively in the response to hyperosmotic and heat shock by preventing the aggregation of stress-denatured proteins and by disaggregating proteins, also in an autonomous, DnaK-independent fashion. Unfolded proteins bind initially to DnaJ; upon interaction with the DnaJ-bound protein, DnaK hydrolyzes its bound ATP, resulting in the formation of a stable complex. GrpE releases ADP from DnaK; ATP binding to DnaK triggers the release of the substrate protein, thus completing the reaction cycle. Several rounds of ATP-dependent interactions between DnaJ, DnaK and GrpE are required for fully efficient folding. Also involved, together with DnaK and GrpE, in the DNA replication of plasmids through activation of initiation proteins. The sequence is that of Chaperone protein DnaJ from Mycoplasmoides gallisepticum (strain R(low / passage 15 / clone 2)) (Mycoplasma gallisepticum).